The chain runs to 323 residues: tRNA dimethylallyltransferase (323 aa).

Residue glycine 12–threonine 19 coordinates ATP. Threonine 14–threonine 19 is a binding site for substrate. 2 interaction with substrate tRNA regions span residues aspartate 37–leucine 40 and glutamine 161–arginine 165.

It belongs to the IPP transferase family. As to quaternary structure, monomer. Requires Mg(2+) as cofactor.

It carries out the reaction adenosine(37) in tRNA + dimethylallyl diphosphate = N(6)-dimethylallyladenosine(37) in tRNA + diphosphate. In terms of biological role, catalyzes the transfer of a dimethylallyl group onto the adenine at position 37 in tRNAs that read codons beginning with uridine, leading to the formation of N6-(dimethylallyl)adenosine (i(6)A). The sequence is that of tRNA dimethylallyltransferase from Pseudomonas aeruginosa (strain UCBPP-PA14).